Consider the following 410-residue polypeptide: MIDMLVLRLPFIDSLVCSRLSGNDLIAFVDLSKIATLSGMNLSARTVEYHIDGDLTVSGLSHPFESLPTHYSGIAFKIYEGSKNFYPCVEIKASPAKVLQGHNVFGTTDLALCSEALLLNFANSLPCLYDLLDVNATTISRIDATFSARAPNENIAKQVIDHLRNVSNGQTKSTRSQNWESTVTWNETSRHRTLVAYLKHVELQHQIQQLSSKPSAKMTSYQKEQLKVLSNPDLLEFASGLVRFEARIKTRYLKSFGLPLNLFDAIRFASDYNSQGKDLIFDLWSFSFSELFKAFEGDSMNIYDDSAVLDAIQSKHFTITPSGKTSFAKASRYFGFYRRLVNEGYDSVALTMPRNSFWRYVSALVECGIPKSQLMNLSTCNNVVPLVRFINVDFSSQRPDWYNEPVLKIA.

It belongs to the inovirus G2P protein family.

The enzyme catalyses ATP + (deoxyribonucleotide)n-3'-hydroxyl + 5'-phospho-(deoxyribonucleotide)m = (deoxyribonucleotide)n+m + AMP + diphosphate.. In terms of biological role, isoform G2P plays an essential role in viral DNA replication. Binds the origin of replication and cleaves the dsDNA replicative form I (RFI) and becomes covalently bound to it via phosphotyrosine bond, generating the dsDNA replicative form II (RFII). In turn, viral DNA replication initiates at the 3'-OH of the cleavage site. After one round of rolling circle synthesis, protein G2P is linked to the newly synthesized ssDNA and joins the ends of the displaced strand to generate a circular single-stranded molecule ready to be packed into a virion. Its function is as follows. Isoform G10P protein binds to double-stranded DNA and prevents hydrolysis by nucleases. Additionally, G10P is an inhibitor of DNA replication and may have a role in the transition from semiconservative replicative form DNA replication to single-stranded DNA synthesis in the life cycle. The polypeptide is Replication-associated protein G2P (II) (Enterobacteria phage M13 (Bacteriophage M13)).